Consider the following 330-residue polypeptide: Aspartate--ammonia ligase (330 aa).

This sequence belongs to the class-II aminoacyl-tRNA synthetase family. AsnA subfamily.

The protein localises to the cytoplasm. It catalyses the reaction L-aspartate + NH4(+) + ATP = L-asparagine + AMP + diphosphate + H(+). It participates in amino-acid biosynthesis; L-asparagine biosynthesis; L-asparagine from L-aspartate (ammonia route): step 1/1. This Streptococcus pyogenes serotype M5 (strain Manfredo) protein is Aspartate--ammonia ligase.